The chain runs to 179 residues: Repressor of phase 1 flagellin gene (179 aa).

Functionally, transcriptional repressor of the FliC phase-1 flagellin. In Salmonella abony, this protein is Repressor of phase 1 flagellin gene (fljA).